We begin with the raw amino-acid sequence, 299 residues long: Palmitoyltransferase ZDHHC3 (299 aa).

Topologically, residues 1-47 are cytoplasmic; the sequence is MMLIPTHHFRNIERKPEYLQPEKCVPPPYPGPVGTMWFIRDGCGIAC. Phosphotyrosine is present on tyrosine 18. A helical transmembrane segment spans residues 48–68; the sequence is AIVTWFLVLYAEFVVLFVMLI. Topologically, residues 69–72 are extracellular; the sequence is PSRD. A helical transmembrane segment spans residues 73–93; that stretch reads YVYSIINGIVFNLLAFLALAS. Over 94–171 the chain is Cytoplasmic; it reads HCRAMLTDPG…NCVGENNQKY (78 aa). The DHHC domain maps to 127–177; the sequence is YKCPKCCSIKPDRAHHCSVCKRCIRKMDHHCPWVNNCVGENNQKYFVLFTM. Cysteine 146 carries the S-palmitoyl cysteine lipid modification. Residue cysteine 157 is the S-palmitoyl cysteine intermediate of the active site. The helical transmembrane segment at 172 to 192 threads the bilayer; the sequence is FVLFTMYIALISLHALIMVGF. At 193–214 the chain is on the extracellular side; it reads HFLHCFEEDWTKCSSFSPPTTV. A helical transmembrane segment spans residues 215–235; the sequence is ILLILLCFEGLLFLIFTSVMF. Residues 236–299 are Cytoplasmic-facing; that stretch reads GTQVHSICTD…GKADPYQYVV (64 aa).

The protein belongs to the DHHC palmitoyltransferase family. Monomer. Homooligomers. The monomeric form has a higher catalytic activity. Forms heterooligomers with ZDHHC7. Interacts with TNFRSF10A. Autopalmitoylated. In terms of processing, phosphorylation by FGFR1 and SRC probably regulates the palmitoyltransferase activity. Widely expressed with significant expression in heart, lung, liver, skeletal muscle, kidney, testis, thymus, small intestine and leukocyte.

The protein localises to the golgi apparatus membrane. It carries out the reaction L-cysteinyl-[protein] + hexadecanoyl-CoA = S-hexadecanoyl-L-cysteinyl-[protein] + CoA. The enzyme catalyses L-cysteinyl-[protein] + tetradecanoyl-CoA = S-tetradecanoyl-L-cysteinyl-[protein] + CoA. It catalyses the reaction L-cysteinyl-[protein] + octadecanoyl-CoA = S-octadecanoyl-L-cysteinyl-[protein] + CoA. Its function is as follows. Golgi-localized palmitoyltransferase that catalyzes the addition of palmitate onto various protein substrates. Has no stringent fatty acid selectivity and in addition to palmitate can also transfer onto target proteins myristate from tetradecanoyl-CoA and stearate from octadecanoyl-CoA. Plays an important role in G protein-coupled receptor signaling pathways involving GNAQ and potentially other heterotrimeric G proteins by regulating their dynamic association with the plasma membrane. Palmitoylates ITGA6 and ITGB4, thereby regulating the alpha-6/beta-4 integrin localization, expression and function in cell adhesion to laminin. Plays a role in the TRAIL-activated apoptotic signaling pathway most probably through the palmitoylation and localization to the plasma membrane of TNFRSF10A. In the brain, by palmitoylating the gamma subunit GABRG2 of GABA(A) receptors and regulating their postsynaptic accumulation, plays a role in synaptic GABAergic inhibitory function and GABAergic innervation. Palmitoylates the neuronal protein GAP43 which is also involved in the formation of GABAergic synapses. Palmitoylates NCDN thereby regulating its association with endosome membranes. Probably palmitoylates PRCD and is involved in its proper localization within the photoreceptor. Could mediate the palmitoylation of NCAM1 and regulate neurite outgrowth. Could palmitoylate DNAJC5 and regulate its localization to Golgi membranes. Also constitutively palmitoylates DLG4. May also palmitoylate SNAP25. Could palmitoylate the glutamate receptors GRIA1 and GRIA2 but this has not been confirmed in vivo. Could also palmitoylate the D(2) dopamine receptor DRD2. May also palmitoylate LAMTOR1, promoting its localization to lysosomal membranes. Palmitoylates the Toll-like receptor 9/TLR9 in the Golgi and thereby regulates TLR9 trafficking to endosomes. May palmitoylate CALHM1 and CALHM3 subunits of gustatory voltage-gated ion channels and modulate channel gating and kinetics. May also function as a calcium transporter. The polypeptide is Palmitoyltransferase ZDHHC3 (Homo sapiens (Human)).